We begin with the raw amino-acid sequence, 304 residues long: Glutaminase (304 aa).

Residues Ser63, Asn114, Glu158, Asn165, Tyr189, Tyr240, and Val258 each contribute to the substrate site.

The protein belongs to the glutaminase family. Homotetramer.

The catalysed reaction is L-glutamine + H2O = L-glutamate + NH4(+). The sequence is that of Glutaminase from Shewanella putrefaciens (strain CN-32 / ATCC BAA-453).